Reading from the N-terminus, the 311-residue chain is MTILIDRHSDQNDAGDEIVEKNQGNGKEEETELVLDAGFEAPHTNSFGRTFRDYDAESERRRGVEEFYRVNHIGQTVDFVRKMREEYEKLNRTEMSIWECCELLNEFIDESDPDLDEPQIEHLLQTAEAIRKDYPDEDWLHLTGLIHDLGKVLLHSSFGELPQWAVVGDTFPVGCAFDESIVHHKYFKENPDYDNPSYNSKYGIYTEGCGLDNVLMSWGHDDYMYLVAKENQTTLPSAGLFIIRYHSFYALHKSEAYKHLMNNEDRENMKWLKVFNKYDLYSKSKVRVNVEEVKPYYLSLTNKYFPSKLKW.

Residues 1–11 show a composition bias toward basic and acidic residues; it reads MTILIDRHSDQ. Residues 1-29 form a disordered region; the sequence is MTILIDRHSDQNDAGDEIVEKNQGNGKEE. Substrate contacts are provided by residues arginine 52 and 109 to 111; that span reads DES. Residues histidine 122, histidine 147, and aspartate 148 each coordinate Fe cation. Residues lysine 151 and 168-169 each bind substrate; that span reads GD. Residues histidine 220, histidine 246, and aspartate 279 each contribute to the Fe cation site. Residue 246–247 coordinates substrate; sequence HS.

It belongs to the myo-inositol oxygenase family. The cofactor is Fe cation. In terms of tissue distribution, expressed in roots, young leaves, stems, flowers and siliques.

The protein localises to the cytoplasm. The enzyme catalyses myo-inositol + O2 = D-glucuronate + H2O + H(+). The protein operates within polyol metabolism; myo-inositol degradation into D-glucuronate; D-glucuronate from myo-inositol: step 1/1. Functionally, catalyzes the oxygenative cleavage of myo-inositol to D-glucuronate. Involved in the biosynthesis of UDP-glucuronic acid (UDP-GlcA), providing nucleotide sugars for cell-wall polymers. May be also involved in plant ascorbate biosynthesis. This is Inositol oxygenase 1 (MIOX1) from Arabidopsis thaliana (Mouse-ear cress).